The chain runs to 818 residues: METYQQMNSGSGPRSVGTPQGQYMDVGEMPPMDAKQQTMLWQQNQYMGDSGIQSGATTQAPPSVSSKHGLDDMDTGEGMDTSRMMFDFDQGFSTQAFTQEQVDEMNQQLNQTRSQRVRAAMFPETLEEGVQIPSTQLDPGQPTAVQRLSEPSQMLKHAVVNLINYQDDADLATRAIPELTKLLNDEDQVVVSQAAMMVHQLSKKEASRHAIMNSPQMVAALVRAMTNTNDLETTRCAAGTLHNLSHHRQGLLTIFKSGGIPALVKLLSSPVESVLFYAITTLHNLLLHQEGSKMAVRLAGGLQKMVLLLQRNNLKFLAITTDCLQILAYGNQESKLIILASGGPGELVRIMRSYTYEKLLWTTSRVLKVLSVCASNKPAIVEAGSAGPSMHLGHQSQRLVQNCLWTLRNLSDAATKSSDIEGLLQMLVQLLASNDINIVTCAAGILSNLTCNNQRNKVTVCQVGGIEALVRTILQAGDREDITEPAVCALRHLTSRHGEAEMAQNAVRLHYGLPVLVKLLHPPSRWPLIKAVVGLIRNLALCPANHAPLREHGAIPRIVQLLIRAHQDTQRRATAGSGNTSAYVDGVRMEEIVEGTVGALHIMAREAHNRAVIRGLNCISLFAQLLYSPIDNIQRVAAGVLCELAADKEGAEMIEQEGTTAPLTELLHSRNEGVATYAAAVLFRMSEDKPQDYKKRLSVELTSSLFRGEQVPWGEPPGLDDMDSSQLLPEEQGFRGYQGSGPGSVPSGPPHDMNRQDSMQGLELGSQQGTAYGSHMPDLGPNTDLHFDPMDGGGSSMGGPHTPTDPQNQMAAWFDTDL.

Polar residues-rich tracts occupy residues 1–21 and 48–66; these read METY…TPQG and GDSG…SVSS. Disordered regions lie at residues 1-24 and 48-71; these read METY…GQYM and GDSG…HGLD. ARM repeat units lie at residues 164–203, 248–287, 412–451, 454–495, 501–541, 543–582, and 648–687; these read NYQD…QLSK, RQGL…NLLL, DAAT…NLTC, QRNK…HLTS, EMAQ…NLAL, PANH…NTSA, and KEGA…RMSE. Positions 732–818 are disordered; the sequence is QGFRGYQGSG…QMAAWFDTDL (87 aa).

This sequence belongs to the beta-catenin family.

Its subcellular location is the cytoplasm. The protein localises to the cytoskeleton. In terms of biological role, binds to the cytoplasmic domain of the cell-cell adhesion molecule E-cadherin, and perhaps to other (membrane) proteins. The association of catenins to cadherins produces a complex which is linked to the actin filament network, and which seems to be of primary importance for cadherins cell-adhesion properties. The chain is Catenin beta from Urechis caupo (Innkeeper worm).